A 364-amino-acid chain; its full sequence is Probable dual-specificity RNA methyltransferase RlmN (364 aa).

Glu107 functions as the Proton acceptor in the catalytic mechanism. The 234-residue stretch at 113–346 (HEYGNSVCVT…ATIRREQGSD (234 aa)) folds into the Radical SAM core domain. Cys120 and Cys351 form a disulfide bridge. [4Fe-4S] cluster contacts are provided by Cys127, Cys131, and Cys134. S-adenosyl-L-methionine contacts are provided by residues 177–178 (GE), Ser209, 232–234 (SLH), and Asn308. The active-site S-methylcysteine intermediate is the Cys351.

Belongs to the radical SAM superfamily. RlmN family. It depends on [4Fe-4S] cluster as a cofactor.

The protein localises to the cytoplasm. It catalyses the reaction adenosine(2503) in 23S rRNA + 2 reduced [2Fe-2S]-[ferredoxin] + 2 S-adenosyl-L-methionine = 2-methyladenosine(2503) in 23S rRNA + 5'-deoxyadenosine + L-methionine + 2 oxidized [2Fe-2S]-[ferredoxin] + S-adenosyl-L-homocysteine. The enzyme catalyses adenosine(37) in tRNA + 2 reduced [2Fe-2S]-[ferredoxin] + 2 S-adenosyl-L-methionine = 2-methyladenosine(37) in tRNA + 5'-deoxyadenosine + L-methionine + 2 oxidized [2Fe-2S]-[ferredoxin] + S-adenosyl-L-homocysteine. Functionally, specifically methylates position 2 of adenine 2503 in 23S rRNA and position 2 of adenine 37 in tRNAs. Confers resistance to some classes of antibiotics. This chain is Probable dual-specificity RNA methyltransferase RlmN, found in Staphylococcus epidermidis (strain ATCC 12228 / FDA PCI 1200).